We begin with the raw amino-acid sequence, 341 residues long: General L-amino acid-binding periplasmic protein AapJ (341 aa).

Positions 1 to 23 (MKNKLLSAAIGAAVLAVGASAAS) are cleaved as a signal peptide.

The protein belongs to the bacterial solute-binding protein 3 family. In terms of assembly, the complex is composed of two ATP-binding proteins (AapP), two transmembrane proteins (AapM and AapQ) and a solute-binding protein (AapJ).

It is found in the periplasm. In terms of biological role, part of the ABC transporter complex AapJQMP involved in uptake of L-amino acids. Affects the efflux of these amino acids as well. Essential for the development of bacteroids, the differentiated legume-symbiotic forms of this bacterium, and for the effective N(2) fixation by them. The polypeptide is General L-amino acid-binding periplasmic protein AapJ (aapJ) (Rhizobium johnstonii (strain DSM 114642 / LMG 32736 / 3841) (Rhizobium leguminosarum bv. viciae)).